A 286-amino-acid polypeptide reads, in one-letter code: L-ribulose 3-epimerase (286 aa).

Residues histidine 12, serine 69, glutamate 152, and glutamate 158 each coordinate D-allulose. Histidine 12, serine 69, glutamate 152, and glutamate 158 together coordinate D-fructose. Glutamate 152 serves as the catalytic Proton donor/acceptor. Glutamate 152 contributes to the Mn(2+) binding site. Aspartate 185 serves as a coordination point for Mn(2+). D-allulose-binding residues include histidine 188, histidine 211, arginine 217, and glutamate 246. Positions 188, 211, 217, and 246 each coordinate D-fructose. Histidine 211 provides a ligand contact to Mn(2+). The Proton donor/acceptor role is filled by glutamate 246. Glutamate 246 provides a ligand contact to Mn(2+).

The protein belongs to the hyi family. Homodimer. Mn(2+) is required as a cofactor.

It carries out the reaction L-ribulose = L-xylulose. The catalysed reaction is D-ribulose = D-xylulose. It catalyses the reaction D-allulose = keto-D-fructose. The enzyme catalyses keto-L-tagatose = keto-L-sorbose. It carries out the reaction keto-D-tagatose = keto-D-sorbose. In terms of biological role, catalyzes the epimerization of various ketoses at the C(3) position. Exhibits the highest enzymatic activity toward L-ribulose, followed by D-ribulose, D-allulose and D-fructose. Shows lower activity with L-xylulose, L-tagatose, D-xylulose, D-tagatose, L-sorbose, D-sorbose, and weak activity with L-allulose and L-fructose. This is L-ribulose 3-epimerase from Methylomonas sp. (strain DH-1).